The following is a 740-amino-acid chain: Ethylene receptor 1 (740 aa).

Transmembrane regions (helical) follow at residues 23–43, 53–73, and 92–112; these read ISDF…IYFV, WVLV…LINL, and VLTA…IPDL. Residues C65 and H69 each coordinate Cu cation. A GAF domain is found at 158 to 307; the sequence is DRHTILKTTL…VVADQVAVAL (150 aa). The Histidine kinase domain maps to 350-588; the sequence is VMNHEMRTPM…TFIVKLGIAE (239 aa). H353 is subject to Phosphohistidine; by autocatalysis. Residues 614-731 enclose the Response regulatory domain; that stretch reads KVLVMDDNGV…KMRSVLSELI (118 aa). Position 662 is a 4-aspartylphosphate (D662).

The protein belongs to the ethylene receptor family. In terms of assembly, homodimer; disulfide-linked. Cu cation serves as cofactor. In terms of processing, activation probably requires a transfer of a phosphate group between a His in the transmitter domain and an Asp of the receiver domain.

It is found in the endoplasmic reticulum membrane. The enzyme catalyses ATP + protein L-histidine = ADP + protein N-phospho-L-histidine.. In terms of biological role, may act early in the ethylene signal transduction pathway, possibly as an ethylene receptor, or as a regulator of the pathway. The chain is Ethylene receptor 1 (ETR1) from Cucumis sativus (Cucumber).